The following is a 106-amino-acid chain: Large ribosomal subunit protein uL22 (106 aa).

The protein belongs to the universal ribosomal protein uL22 family. In terms of assembly, part of the 50S ribosomal subunit.

This protein binds specifically to 23S rRNA; its binding is stimulated by other ribosomal proteins, e.g. L4, L17, and L20. It is important during the early stages of 50S assembly. It makes multiple contacts with different domains of the 23S rRNA in the assembled 50S subunit and ribosome. Its function is as follows. The globular domain of the protein is located near the polypeptide exit tunnel on the outside of the subunit, while an extended beta-hairpin is found that lines the wall of the exit tunnel in the center of the 70S ribosome. This is Large ribosomal subunit protein uL22 from Nautilia profundicola (strain ATCC BAA-1463 / DSM 18972 / AmH).